Consider the following 279-residue polypeptide: Movement protein (279 aa).

Positions 256 to 266 (PPIAIGSPSAS) are enriched in low complexity. The disordered stretch occupies residues 256–279 (PPIAIGSPSASRNNSFRSQVVNGL). Polar residues predominate over residues 267 to 279 (RNNSFRSQVVNGL).

This sequence belongs to the cucumovirus movement protein family.

It localises to the host cell junction. The protein resides in the host plasmodesma. Transports viral genome to neighboring plant cells directly through plasmosdesmata, without any budding. The movement protein allows efficient cell to cell propagation, by bypassing the host cell wall barrier. Acts by forming a tubular structure at the host plasmodesmata, enlarging it enough to allow free passage of virion capsids. The polypeptide is Movement protein (Cucumis sativus (Cucumber)).